The following is a 469-amino-acid chain: Glutamate--tRNA ligase (469 aa).

A 'HIGH' region motif is present at residues P11 to N21. Positions G118–P131 are enriched in basic and acidic residues. Positions G118–P139 are disordered. A 'KMSKS' region motif is present at residues K243–R247. ATP is bound at residue K246.

It belongs to the class-I aminoacyl-tRNA synthetase family. Glutamate--tRNA ligase type 1 subfamily. As to quaternary structure, monomer.

The protein resides in the cytoplasm. It catalyses the reaction tRNA(Glu) + L-glutamate + ATP = L-glutamyl-tRNA(Glu) + AMP + diphosphate. Functionally, catalyzes the attachment of glutamate to tRNA(Glu) in a two-step reaction: glutamate is first activated by ATP to form Glu-AMP and then transferred to the acceptor end of tRNA(Glu). This Burkholderia pseudomallei (strain 1106a) protein is Glutamate--tRNA ligase.